We begin with the raw amino-acid sequence, 418 residues long: Putative ion-transport protein YfeO (418 aa).

12 consecutive transmembrane segments (helical) span residues 10–30, 54–74, 99–119, 120–140, 149–169, 186–206, 223–243, 258–278, 300–320, 322–342, 343–363, and 371–391; these read LLLS…LIVV, DSPL…GLVI, ALPG…SLGP, EHPI…RLLP, ILAS…AALI, LFAP…FFHP, ILSG…AVWC, VLVL…GGPV, DYFL…ASGF, GGRI…LHEH, VPAV…VLVV, and LFMA…CIVM.

It belongs to the chloride channel (TC 2.A.49) family.

The protein resides in the cell membrane. The sequence is that of Putative ion-transport protein YfeO from Shigella boydii serotype 18 (strain CDC 3083-94 / BS512).